The primary structure comprises 733 residues: E3 ubiquitin-protein ligase COP1 (733 aa).

The disordered stretch occupies residues 1–43 (MSGSRQAGSGSAGTSPGSSAASSVTSASSSLSSSPSPPSVAAS). The Nuclear localization signal 1 signature appears at 111–115 (SSRKR). The RING-type zinc-finger motif lies at 138–176 (CPICFDMIEEAYMTKCGHSFCYKCIHQSLEDNNRCPKCN). A Nuclear localization signal 2 motif is present at residues 197-208 (KQKQRFEEKRFK). A coiled-coil region spans residues 231 to 306 (DQDNLDLANV…RVEEMSGLYS (76 aa)). A Nuclear export signal motif is present at residues 237-247 (LANVNLMLELL). Residues 307-327 (PVSEDSTVPQFEAPSPSHSSI) form a disordered region. WD repeat units lie at residues 421-460 (NGSSIVSSIEFDRDCDYFAIAGVTKKIKVYEYGTVIQDAV), 470-510 (TCNS…RSKV), 513-553 (EHEK…SVAS), 555-595 (EAKA…QPIM), 599-637 (GHRKAVSYAKFVSGEEIVSASTDSQLKLWNVGKPYCLRS), 640-679 (GHINEKNFVGLASNGDYIACGSENNSLYLYYKGLSKTLLT), and 695-731 (EDDTNEFVSAVCWRALSDGESNVLIAANSQGTIKVLE). An interaction with TRIB1 region spans residues 645–647 (KNF).

It belongs to the COP1 family. As to quaternary structure, homodimer. Homodimerization is mediated by the coiled coil domain. Component of the DCX DET1-COP1 ubiquitin ligase complex at least composed of RBX1, DET1, DDB1, CUL4A and COP1. Isoform 2 does not interact with CUL4A but still binds to RBX1, suggesting that the interaction may be mediated by another cullin protein. Isoform 1 and isoform 2 interact with CUL5 but not with CUL1, CUL2 not CUL3. Interacts with bZIP transcription factors JUN, JUNB and JUND but not with FOS, ATF2 nor XBP1. Interacts with p53 (TP53). Interacts with COPS6; this interaction stabilizes RFWD2 through reducing its auto-ubiquitination and decelerating its turnover rate. Interacts with SFN; this interaction leads to SFN degradation. Interacts with p53/TP53 and MTA1. Interacts with TRIB1 (via C-terminus) and TRIB2.

It is found in the nucleus speckle. The protein resides in the cytoplasm. It carries out the reaction S-ubiquitinyl-[E2 ubiquitin-conjugating enzyme]-L-cysteine + [acceptor protein]-L-lysine = [E2 ubiquitin-conjugating enzyme]-L-cysteine + N(6)-ubiquitinyl-[acceptor protein]-L-lysine.. Its pathway is protein modification; protein ubiquitination. Its activity is regulated as follows. TRIB1 competes with substrates for RFWD2 binding. Its function is as follows. E3 ubiquitin-protein ligase that mediates ubiquitination and subsequent proteasomal degradation of target proteins. E3 ubiquitin ligases accept ubiquitin from an E2 ubiquitin-conjugating enzyme in the form of a thioester and then directly transfers the ubiquitin to targeted substrates. Involved in JUN ubiquitination and degradation. Directly involved in p53 (TP53) ubiquitination and degradation, thereby abolishing p53-dependent transcription and apoptosis. Ubiquitinates p53 independently of MDM2 or RCHY1. Probably mediates E3 ubiquitin ligase activity by functioning as the essential RING domain subunit of larger E3 complexes. In contrast, it does not constitute the catalytic RING subunit in the DCX DET1-COP1 complex that negatively regulates JUN, the ubiquitin ligase activity being mediated by RBX1. Involved in 14-3-3 protein sigma/SFN ubiquitination and proteasomal degradation, leading to AKT activation and promotion of cell survival. Ubiquitinates MTA1 leading to its proteasomal degradation. Upon binding to TRIB1, ubiquitinates CEBPA, which lacks a canonical COP1-binding motif. The protein is E3 ubiquitin-protein ligase COP1 of Mus musculus (Mouse).